Here is an 84-residue protein sequence, read N- to C-terminus: Small ribosomal subunit protein bS20 (84 aa).

Positions 1-22 (MPAPTKRERQNRKRFERNRSVR) are disordered. Residues 9–22 (RQNRKRFERNRSVR) show a composition bias toward basic residues.

It belongs to the bacterial ribosomal protein bS20 family.

Its function is as follows. Binds directly to 16S ribosomal RNA. This Rubrobacter xylanophilus (strain DSM 9941 / JCM 11954 / NBRC 16129 / PRD-1) protein is Small ribosomal subunit protein bS20.